A 180-amino-acid chain; its full sequence is Nucleoside-triphosphatase THEP1 (180 aa).

ATP is bound by residues 8 to 15 and 100 to 107; these read GPVGSIKA and VIIIDELG.

This sequence belongs to the THEP1 NTPase family.

The catalysed reaction is a ribonucleoside 5'-triphosphate + H2O = a ribonucleoside 5'-diphosphate + phosphate + H(+). Its function is as follows. Has nucleotide phosphatase activity towards ATP, GTP, CTP, TTP and UTP. May hydrolyze nucleoside diphosphates with lower efficiency. In Picrophilus torridus (strain ATCC 700027 / DSM 9790 / JCM 10055 / NBRC 100828 / KAW 2/3), this protein is Nucleoside-triphosphatase THEP1.